Consider the following 291-residue polypeptide: Protease HtpX (291 aa).

Transmembrane regions (helical) follow at residues 4–24 (IALF…VLNI) and 36–56 (LSGL…ISLM). H143 contacts Zn(2+). E144 is a catalytic residue. Position 147 (H147) interacts with Zn(2+). Transmembrane regions (helical) follow at residues 151 to 171 (GDMI…IFLS) and 199 to 219 (FIVS…LTMW). E225 serves as a coordination point for Zn(2+).

It belongs to the peptidase M48B family. Zn(2+) is required as a cofactor.

Its subcellular location is the cell inner membrane. The chain is Protease HtpX from Aliivibrio fischeri (strain MJ11) (Vibrio fischeri).